The sequence spans 294 residues: Putative glucose-6-phosphate 1-epimerase (294 aa).

Substrate-binding residues include Arg74 and Arg99. The active site involves His164. Asp208 contributes to the substrate binding site. Glu267 is a catalytic residue.

This sequence belongs to the glucose-6-phosphate 1-epimerase family. As to quaternary structure, monomer in solution.

The enzyme catalyses alpha-D-glucose 6-phosphate = beta-D-glucose 6-phosphate. Probably functions as a hexose-6-phosphate 1-epimerase. This Salmonella typhimurium (strain LT2 / SGSC1412 / ATCC 700720) protein is Putative glucose-6-phosphate 1-epimerase.